The chain runs to 135 residues: Protein NrdI (135 aa).

It belongs to the NrdI family.

Its function is as follows. Probably involved in ribonucleotide reductase function. This Rhizobium johnstonii (strain DSM 114642 / LMG 32736 / 3841) (Rhizobium leguminosarum bv. viciae) protein is Protein NrdI.